The following is a 235-amino-acid chain: Small ribosomal subunit protein eS4 (235 aa).

The S4 RNA-binding domain maps to 38-101 (IPLLVLVRDF…EKSYRILFDE (64 aa)).

This sequence belongs to the eukaryotic ribosomal protein eS4 family.

The polypeptide is Small ribosomal subunit protein eS4 (rps4e) (Archaeoglobus fulgidus (strain ATCC 49558 / DSM 4304 / JCM 9628 / NBRC 100126 / VC-16)).